The primary structure comprises 254 residues: Uridine-cytidine kinase 1 (254 aa).

Residues 1–29 form a disordered region; that stretch reads MASAGGDECEGAAPEADRPHQRPFLIGVS. 30–38 provides a ligand contact to ATP; that stretch reads GGTASGKST. Residues Asp-87, Tyr-115, His-120, Arg-146, Arg-155, and Gln-163 each contribute to the substrate site. Residue Asp-192 participates in ATP binding. The interval 224–254 is disordered; that stretch reads SYKRTFSEPGDHPGMLTSGKRSHLESSSRPH. Phosphothreonine is present on Thr-228. Phosphoserine is present on Ser-230. Residues 245–254 are compositionally biased toward basic and acidic residues; that stretch reads SHLESSSRPH.

This sequence belongs to the uridine kinase family.

The catalysed reaction is uridine + ATP = UMP + ADP + H(+). It catalyses the reaction cytidine + ATP = CMP + ADP + H(+). It functions in the pathway pyrimidine metabolism; CTP biosynthesis via salvage pathway; CTP from cytidine: step 1/3. The protein operates within pyrimidine metabolism; UMP biosynthesis via salvage pathway; UMP from uridine: step 1/1. Functionally, phosphorylates uridine and cytidine to uridine monophosphate and cytidine monophosphate. Does not phosphorylate deoxyribonucleosides or purine ribonucleosides. Can use ATP or GTP as a phosphate donor. This chain is Uridine-cytidine kinase 1 (UCK1), found in Macaca fascicularis (Crab-eating macaque).